A 605-amino-acid polypeptide reads, in one-letter code: Phosphoenolpyruvate carboxykinase (ATP) (605 aa).

The span at S27–N48 shows a compositional bias: low complexity. The segment at S27–P67 is disordered. G307–T314 contributes to the ATP binding site.

It belongs to the phosphoenolpyruvate carboxykinase (ATP) family.

It catalyses the reaction oxaloacetate + ATP = phosphoenolpyruvate + ADP + CO2. It functions in the pathway carbohydrate biosynthesis; gluconeogenesis. In Neurospora crassa (strain ATCC 24698 / 74-OR23-1A / CBS 708.71 / DSM 1257 / FGSC 987), this protein is Phosphoenolpyruvate carboxykinase (ATP) (acu-6).